The sequence spans 336 residues: Phospho-N-acetylmuramoyl-pentapeptide-transferase (336 aa).

The next 10 helical transmembrane spans lie at 3 to 23 (LTLI…PYFI), 53 to 73 (GGTV…LFSI), 78 to 98 (SLAL…IGFL), 118 to 138 (LALQ…PSGI), 143 to 163 (VFGY…FWVV), 174 to 194 (GIDG…GVIA), 200 to 220 (FDVL…FLFN), 226 to 246 (VFMG…ISIA), 251 to 271 (WTLL…MLQV), and 316 to 336 (AFLW…LYVF).

It belongs to the glycosyltransferase 4 family. MraY subfamily. Requires Mg(2+) as cofactor.

The protein resides in the cell membrane. The enzyme catalyses UDP-N-acetyl-alpha-D-muramoyl-L-alanyl-gamma-D-glutamyl-L-lysyl-D-alanyl-D-alanine + di-trans,octa-cis-undecaprenyl phosphate = Mur2Ac(oyl-L-Ala-gamma-D-Glu-L-Lys-D-Ala-D-Ala)-di-trans,octa-cis-undecaprenyl diphosphate + UMP. The protein operates within cell wall biogenesis; peptidoglycan biosynthesis. Catalyzes the initial step of the lipid cycle reactions in the biosynthesis of the cell wall peptidoglycan: transfers peptidoglycan precursor phospho-MurNAc-pentapeptide from UDP-MurNAc-pentapeptide onto the lipid carrier undecaprenyl phosphate, yielding undecaprenyl-pyrophosphoryl-MurNAc-pentapeptide, known as lipid I. The protein is Phospho-N-acetylmuramoyl-pentapeptide-transferase of Streptococcus pyogenes serotype M6 (strain ATCC BAA-946 / MGAS10394).